Consider the following 101-residue polypeptide: ATP-dependent Clp protease adapter protein ClpS 1 (101 aa).

Belongs to the ClpS family. Binds to the N-terminal domain of the chaperone ClpA.

Its function is as follows. Involved in the modulation of the specificity of the ClpAP-mediated ATP-dependent protein degradation. In Bradyrhizobium diazoefficiens (strain JCM 10833 / BCRC 13528 / IAM 13628 / NBRC 14792 / USDA 110), this protein is ATP-dependent Clp protease adapter protein ClpS 1.